The following is a 545-amino-acid chain: CTP synthase (545 aa).

The amidoligase domain stretch occupies residues 1-266 (MTTNYIFVTG…DDYICKRFSL (266 aa)). S14 provides a ligand contact to CTP. S14 contacts UTP. ATP is bound by residues 15–20 (SLGKGI) and D72. Mg(2+) contacts are provided by D72 and E140. Residues 147 to 149 (DIE), 187 to 192 (KTKPTQ), and K223 contribute to the CTP site. UTP-binding positions include 187 to 192 (KTKPTQ) and K223. 239-241 (KDV) contributes to the ATP binding site. In terms of domain architecture, Glutamine amidotransferase type-1 spans 291–542 (TIGMVGKYIE…VKAASEFQKR (252 aa)). Residue G352 coordinates L-glutamine. The active-site Nucleophile; for glutamine hydrolysis is C379. Residues 380–383 (LGMQ), E403, and R470 each bind L-glutamine. Catalysis depends on residues H515 and E517.

Belongs to the CTP synthase family. In terms of assembly, homotetramer.

It carries out the reaction UTP + L-glutamine + ATP + H2O = CTP + L-glutamate + ADP + phosphate + 2 H(+). The enzyme catalyses L-glutamine + H2O = L-glutamate + NH4(+). It catalyses the reaction UTP + NH4(+) + ATP = CTP + ADP + phosphate + 2 H(+). Its pathway is pyrimidine metabolism; CTP biosynthesis via de novo pathway; CTP from UDP: step 2/2. Its activity is regulated as follows. Allosterically activated by GTP, when glutamine is the substrate; GTP has no effect on the reaction when ammonia is the substrate. The allosteric effector GTP functions by stabilizing the protein conformation that binds the tetrahedral intermediate(s) formed during glutamine hydrolysis. Inhibited by the product CTP, via allosteric rather than competitive inhibition. Catalyzes the ATP-dependent amination of UTP to CTP with either L-glutamine or ammonia as the source of nitrogen. Regulates intracellular CTP levels through interactions with the four ribonucleotide triphosphates. This chain is CTP synthase, found in Escherichia coli O127:H6 (strain E2348/69 / EPEC).